Reading from the N-terminus, the 399-residue chain is 1-deoxy-D-xylulose 5-phosphate reductoisomerase (399 aa).

NADPH is bound by residues Thr-13, Gly-14, Ser-15, Ile-16, and Asn-127. Lys-128 is a 1-deoxy-D-xylulose 5-phosphate binding site. Glu-129 is a binding site for NADPH. Position 153 (Asp-153) interacts with Mn(2+). The 1-deoxy-D-xylulose 5-phosphate site is built by Ser-154, Glu-155, Ser-187, and His-210. Glu-155 is a binding site for Mn(2+). Gly-216 provides a ligand contact to NADPH. 1-deoxy-D-xylulose 5-phosphate-binding residues include Ser-223, Asn-228, Lys-229, and Glu-232. Glu-232 is a binding site for Mn(2+).

Belongs to the DXR family. It depends on Mg(2+) as a cofactor. The cofactor is Mn(2+).

The catalysed reaction is 2-C-methyl-D-erythritol 4-phosphate + NADP(+) = 1-deoxy-D-xylulose 5-phosphate + NADPH + H(+). Its pathway is isoprenoid biosynthesis; isopentenyl diphosphate biosynthesis via DXP pathway; isopentenyl diphosphate from 1-deoxy-D-xylulose 5-phosphate: step 1/6. In terms of biological role, catalyzes the NADPH-dependent rearrangement and reduction of 1-deoxy-D-xylulose-5-phosphate (DXP) to 2-C-methyl-D-erythritol 4-phosphate (MEP). In Bordetella pertussis (strain Tohama I / ATCC BAA-589 / NCTC 13251), this protein is 1-deoxy-D-xylulose 5-phosphate reductoisomerase.